The sequence spans 125 residues: Small ribosomal subunit protein uS13 (125 aa).

Residues 90–125 (TRHRRGLPVRGQRTHTNARTKKGPRRAIAGKKKVTK) form a disordered region.

This sequence belongs to the universal ribosomal protein uS13 family. Part of the 30S ribosomal subunit. Forms a loose heterodimer with protein S19. Forms two bridges to the 50S subunit in the 70S ribosome.

Located at the top of the head of the 30S subunit, it contacts several helices of the 16S rRNA. In the 70S ribosome it contacts the 23S rRNA (bridge B1a) and protein L5 of the 50S subunit (bridge B1b), connecting the 2 subunits; these bridges are implicated in subunit movement. Contacts the tRNAs in the A and P-sites. This Gemmatimonas aurantiaca (strain DSM 14586 / JCM 11422 / NBRC 100505 / T-27) protein is Small ribosomal subunit protein uS13.